We begin with the raw amino-acid sequence, 281 residues long: UPF0162 protein PD_0709 (281 aa).

2 TPR repeats span residues 193 to 226 and 227 to 260; these read VRIL…VPNQ and PEAL…YPST.

Belongs to the UPF0162 family.

The protein is UPF0162 protein PD_0709 of Xylella fastidiosa (strain Temecula1 / ATCC 700964).